Reading from the N-terminus, the 388-residue chain is Probable E3 ubiquitin-protein ligase LOG2 (388 aa).

Positions 1-43 (MGNISSSGGEGRRRRRRNHTAAPPPPPPPPSSSLPPPPLPTEI) are disordered. Residue G2 is the site of N-myristoyl glycine attachment. Positions 22–40 (APPPPPPPPSSSLPPPPLP) are enriched in pro residues. The DAR2 domain stretch occupies residues 159–281 (FTFDATVSGR…GEIKIRVVKQ (123 aa)). Residues 319 to 358 (CVICLSEPRDTTVLPCRHMCMCSGCAKVLRFQTNRCPICR) form an RING-type; atypical zinc finger. The tract at residues 368–388 (KVHGNNGSGNNTGQGETVEQE) is disordered.

It belongs to the RING-type zinc finger family. LOG2 subfamily. As to quaternary structure, interacts with GDU1. Myristoylated (in vitro). As to expression, expressed in the vascular tissues in both phloem and xylem parenchyma cells.

It localises to the cell membrane. The catalysed reaction is S-ubiquitinyl-[E2 ubiquitin-conjugating enzyme]-L-cysteine + [acceptor protein]-L-lysine = [E2 ubiquitin-conjugating enzyme]-L-cysteine + N(6)-ubiquitinyl-[acceptor protein]-L-lysine.. The protein operates within protein modification; protein ubiquitination. Functionally, acts as an E3 ubiquitin-protein ligase, or as part of E3 complex, which accepts ubiquitin from specific E2 ubiquitin-conjugating enzymes and then transfers it to substrates (in vitro). Required for GLUTAMINE DUMPER 1(GDU1)-induced amino acid secretion and for amino acid homeostasis. Ubiquitinates GDU1 (in vitro). The protein is Probable E3 ubiquitin-protein ligase LOG2 (LOG2) of Arabidopsis thaliana (Mouse-ear cress).